We begin with the raw amino-acid sequence, 599 residues long: Leucine zipper putative tumor suppressor 1 (599 aa).

The N-myristoyl glycine moiety is linked to residue G2. Disordered regions lie at residues 135 to 190 and 288 to 324; these read GAIL…TTSS and EFASGQTFEERPRRTRDELECLEPKSKLKPPSQKSQR. Basic and acidic residues predominate over residues 153–162; the sequence is PPDKPKEQEL. Polar residues predominate over residues 174–190; sequence SGRNSMSSLPTHSTTSS. A coiled-coil region spans residues 256 to 572; sequence LSTDECTIQE…LEKALQQLAR (317 aa). Residues 288-313 are compositionally biased toward basic and acidic residues; that stretch reads EFASGQTFEERPRRTRDELECLEPKS.

The protein belongs to the LZTS family. Binds EEF1G, TLK2 and CDK1. Post-translationally, phosphorylated on serine residues. Hyperphosphorylated by the cAMP-dependent kinase PKA during cell-cycle progression.

The protein resides in the cytoplasm. The protein localises to the cell membrane. It localises to the cell projection. Its subcellular location is the dendritic spine. It is found in the postsynaptic density. The protein resides in the synapse. Involved in the regulation of cell growth. May stabilize the active CDC2-cyclin B1 complex and thereby contribute to the regulation of the cell cycle and the prevention of uncontrolled cell proliferation. May act as tumor suppressor. This is Leucine zipper putative tumor suppressor 1 (Lzts1) from Mus musculus (Mouse).